Here is a 186-residue protein sequence, read N- to C-terminus: Elongation factor P (186 aa).

This sequence belongs to the elongation factor P family.

Its subcellular location is the cytoplasm. The protein operates within protein biosynthesis; polypeptide chain elongation. Involved in peptide bond synthesis. Stimulates efficient translation and peptide-bond synthesis on native or reconstituted 70S ribosomes in vitro. Probably functions indirectly by altering the affinity of the ribosome for aminoacyl-tRNA, thus increasing their reactivity as acceptors for peptidyl transferase. The protein is Elongation factor P of Shewanella denitrificans (strain OS217 / ATCC BAA-1090 / DSM 15013).